The chain runs to 586 residues: Lipoprotein LpqB (586 aa).

Positions 1 to 17 (MVRSVFALVFAAVLLGG) are cleaved as a signal peptide. Residue Cys-18 is the site of N-palmitoyl cysteine attachment. A lipid anchor (S-diacylglycerol cysteine) is attached at Cys-18. The tract at residues 26–45 (APQAIGTVERPAPSNLPKPI) is disordered.

This sequence belongs to the LpqB lipoprotein family.

The protein localises to the cell membrane. The chain is Lipoprotein LpqB from Mycobacterium ulcerans (strain Agy99).